Reading from the N-terminus, the 827-residue chain is Valine--tRNA ligase (827 aa).

The short motif at 41–51 (PNVTGQLHLGH) is the 'HIGH' region element. A 'KMSKS' region motif is present at residues 511–515 (KMTKS). K514 contributes to the ATP binding site. The stretch at 765 to 827 (ENLSKEKAQK…KELLDEKIIE (63 aa)) forms a coiled coil.

Belongs to the class-I aminoacyl-tRNA synthetase family. ValS type 1 subfamily. In terms of assembly, monomer.

The protein localises to the cytoplasm. The catalysed reaction is tRNA(Val) + L-valine + ATP = L-valyl-tRNA(Val) + AMP + diphosphate. Functionally, catalyzes the attachment of valine to tRNA(Val). As ValRS can inadvertently accommodate and process structurally similar amino acids such as threonine, to avoid such errors, it has a 'posttransfer' editing activity that hydrolyzes mischarged Thr-tRNA(Val) in a tRNA-dependent manner. This is Valine--tRNA ligase from Mycoplasmopsis pulmonis (strain UAB CTIP) (Mycoplasma pulmonis).